The primary structure comprises 242 residues: Biosynthetic peptidoglycan transglycosylase (242 aa).

A helical membrane pass occupies residues 18-38; sequence VIMAVLCIAILYQLWMFSLVV.

Belongs to the glycosyltransferase 51 family.

Its subcellular location is the cell inner membrane. It carries out the reaction [GlcNAc-(1-&gt;4)-Mur2Ac(oyl-L-Ala-gamma-D-Glu-L-Lys-D-Ala-D-Ala)](n)-di-trans,octa-cis-undecaprenyl diphosphate + beta-D-GlcNAc-(1-&gt;4)-Mur2Ac(oyl-L-Ala-gamma-D-Glu-L-Lys-D-Ala-D-Ala)-di-trans,octa-cis-undecaprenyl diphosphate = [GlcNAc-(1-&gt;4)-Mur2Ac(oyl-L-Ala-gamma-D-Glu-L-Lys-D-Ala-D-Ala)](n+1)-di-trans,octa-cis-undecaprenyl diphosphate + di-trans,octa-cis-undecaprenyl diphosphate + H(+). It functions in the pathway cell wall biogenesis; peptidoglycan biosynthesis. In terms of biological role, peptidoglycan polymerase that catalyzes glycan chain elongation from lipid-linked precursors. The polypeptide is Biosynthetic peptidoglycan transglycosylase (Bordetella bronchiseptica (strain ATCC BAA-588 / NCTC 13252 / RB50) (Alcaligenes bronchisepticus)).